Reading from the N-terminus, the 421-residue chain is Imidazolonepropionase (421 aa).

Histidine 80 and histidine 82 together coordinate Fe(3+). Histidine 80 and histidine 82 together coordinate Zn(2+). Positions 89, 152, and 185 each coordinate 4-imidazolone-5-propanoate. Tyrosine 152 is a binding site for N-formimidoyl-L-glutamate. Position 249 (histidine 249) interacts with Fe(3+). A Zn(2+)-binding site is contributed by histidine 249. A 4-imidazolone-5-propanoate-binding site is contributed by glutamate 252. Fe(3+) is bound at residue aspartate 324. Aspartate 324 lines the Zn(2+) pocket. N-formimidoyl-L-glutamate is bound by residues asparagine 326 and glycine 328. Serine 329 lines the 4-imidazolone-5-propanoate pocket.

Belongs to the metallo-dependent hydrolases superfamily. HutI family. The cofactor is Zn(2+). Requires Fe(3+) as cofactor.

It is found in the cytoplasm. It carries out the reaction 4-imidazolone-5-propanoate + H2O = N-formimidoyl-L-glutamate. The protein operates within amino-acid degradation; L-histidine degradation into L-glutamate; N-formimidoyl-L-glutamate from L-histidine: step 3/3. Catalyzes the hydrolytic cleavage of the carbon-nitrogen bond in imidazolone-5-propanoate to yield N-formimidoyl-L-glutamate. It is the third step in the universal histidine degradation pathway. The sequence is that of Imidazolonepropionase from Bacillus velezensis (strain DSM 23117 / BGSC 10A6 / LMG 26770 / FZB42) (Bacillus amyloliquefaciens subsp. plantarum).